Here is a 344-residue protein sequence, read N- to C-terminus: Dihydroorotase (344 aa).

2 residues coordinate Zn(2+): His14 and His16. Substrate is bound by residues 16–18 (HLR) and Asn42. Zn(2+) is bound by residues Lys99, His136, and His174. Lys99 is subject to N6-carboxylysine. His136 lines the substrate pocket. Leu219 lines the substrate pocket. Zn(2+) is bound at residue Asp247. The active site involves Asp247. Residues His251 and Ala263 each contribute to the substrate site.

It belongs to the metallo-dependent hydrolases superfamily. DHOase family. Class II DHOase subfamily. Homodimer. Requires Zn(2+) as cofactor.

The catalysed reaction is (S)-dihydroorotate + H2O = N-carbamoyl-L-aspartate + H(+). Its pathway is pyrimidine metabolism; UMP biosynthesis via de novo pathway; (S)-dihydroorotate from bicarbonate: step 3/3. Functionally, catalyzes the reversible cyclization of carbamoyl aspartate to dihydroorotate. The chain is Dihydroorotase from Teredinibacter turnerae (strain ATCC 39867 / T7901).